The primary structure comprises 189 residues: Peptidyl-tRNA hydrolase (189 aa).

Residue tyrosine 15 coordinates tRNA. Histidine 20 (proton acceptor) is an active-site residue. TRNA-binding residues include phenylalanine 66, asparagine 68, and asparagine 114.

It belongs to the PTH family. In terms of assembly, monomer.

It is found in the cytoplasm. The catalysed reaction is an N-acyl-L-alpha-aminoacyl-tRNA + H2O = an N-acyl-L-amino acid + a tRNA + H(+). In terms of biological role, hydrolyzes ribosome-free peptidyl-tRNAs (with 1 or more amino acids incorporated), which drop off the ribosome during protein synthesis, or as a result of ribosome stalling. Catalyzes the release of premature peptidyl moieties from peptidyl-tRNA molecules trapped in stalled 50S ribosomal subunits, and thus maintains levels of free tRNAs and 50S ribosomes. This is Peptidyl-tRNA hydrolase from Streptococcus pneumoniae serotype 2 (strain D39 / NCTC 7466).